Here is a 638-residue protein sequence, read N- to C-terminus: Neuroendocrine convertase 2 (638 aa).

Positions 1 to 25 are cleaved as a signal peptide; it reads MKGGCVSQWKAAAGFLFCVMVFASA. A propeptide spanning residues 26–109 is cleaved from the precursor; the sequence is ERPVFTNHFL…QQEGFDRKKR (84 aa). The Peptidase S8 domain occupies 129–453; the sequence is QWYLINTGQA…YGVLDAGAMV (325 aa). Residues Asp-167 and His-208 each act as charge relay system in the active site. Disulfide bonds link Cys-225–Cys-376 and Cys-317–Cys-347. The N-linked (GlcNAc...) asparagine glycan is linked to Asn-375. The Charge relay system role is filled by Ser-384. The P/Homo B domain occupies 461–597; the sequence is TVPERFHCVG…TLMLHGTQSA (137 aa). A disulfide bond links Cys-468 and Cys-494. N-linked (GlcNAc...) asparagine glycans are attached at residues Asn-514 and Asn-524.

It belongs to the peptidase S8 family. Furin subfamily.

The protein resides in the cytoplasmic vesicle. Its subcellular location is the secretory vesicle. It localises to the secreted. It catalyses the reaction Release of protein hormones and neuropeptides from their precursors, generally by hydrolysis of -Lys-Arg-|- bonds.. Functionally, serine endopeptidase which is involved in the processing of hormone and other protein precursors at sites comprised of pairs of basic amino acid residues. Responsible for the release of glucagon from proglucagon in pancreatic A cells. The chain is Neuroendocrine convertase 2 (PCSK2) from Homo sapiens (Human).